The chain runs to 210 residues: Acetoin utilization protein AcuA (210 aa).

The N-acetyltransferase domain maps to 20–161; that stretch reads LIEGPVSPED…YRKIMEKMMN (142 aa).

The protein belongs to the acetyltransferase family. As to quaternary structure, monomer.

It participates in ketone degradation; acetoin degradation. Activity is sensitive to salt concentration, a high concentration of KCL (500 mM) is needed for complete inactivation. In terms of biological role, part of the acuABC operon, which is possibly involved in the breakdown of acetoin and butanediol. Acts as an acetyltransferase inactivating acetyl-CoA synthetase AcsA via acetylation at a Lys residue. This Bacillus subtilis (strain 168) protein is Acetoin utilization protein AcuA (acuA).